The sequence spans 294 residues: Fructose-bisphosphate aldolase class 1 (294 aa).

Catalysis depends on E176, which acts as the Proton acceptor. The active-site Schiff-base intermediate with dihydroxyacetone-P is K213.

It belongs to the class I fructose-bisphosphate aldolase family.

The catalysed reaction is beta-D-fructose 1,6-bisphosphate = D-glyceraldehyde 3-phosphate + dihydroxyacetone phosphate. The protein operates within carbohydrate degradation; glycolysis; D-glyceraldehyde 3-phosphate and glycerone phosphate from D-glucose: step 4/4. This Oceanobacillus iheyensis (strain DSM 14371 / CIP 107618 / JCM 11309 / KCTC 3954 / HTE831) protein is Fructose-bisphosphate aldolase class 1.